Consider the following 117-residue polypeptide: Small ribosomal subunit protein bS6 (117 aa).

A disordered region spans residues 97–117; that stretch reads TEEPSAILTKKDDRRGRRERN.

Belongs to the bacterial ribosomal protein bS6 family.

Binds together with bS18 to 16S ribosomal RNA. This Maricaulis maris (strain MCS10) (Caulobacter maris) protein is Small ribosomal subunit protein bS6.